Here is a 732-residue protein sequence, read N- to C-terminus: Catalase-peroxidase (732 aa).

A disordered region spans residues M1 to P29. Residues W96–Y223 constitute a cross-link (tryptophyl-tyrosyl-methioninium (Trp-Tyr) (with M-249)). H97 serves as the catalytic Proton acceptor. A cross-link (tryptophyl-tyrosyl-methioninium (Tyr-Met) (with W-96)) is located at residues Y223–M249. H264 provides a ligand contact to heme b.

Belongs to the peroxidase family. Peroxidase/catalase subfamily. Homodimer or homotetramer. Heme b is required as a cofactor. In terms of processing, formation of the three residue Trp-Tyr-Met cross-link is important for the catalase, but not the peroxidase activity of the enzyme.

The enzyme catalyses H2O2 + AH2 = A + 2 H2O. It carries out the reaction 2 H2O2 = O2 + 2 H2O. Bifunctional enzyme with both catalase and broad-spectrum peroxidase activity. This chain is Catalase-peroxidase, found in Serratia proteamaculans (strain 568).